The following is a 351-amino-acid chain: Histidinol-phosphate aminotransferase (351 aa).

The residue at position 213 (Lys-213) is an N6-(pyridoxal phosphate)lysine.

This sequence belongs to the class-II pyridoxal-phosphate-dependent aminotransferase family. Histidinol-phosphate aminotransferase subfamily. As to quaternary structure, homodimer. The cofactor is pyridoxal 5'-phosphate.

It carries out the reaction L-histidinol phosphate + 2-oxoglutarate = 3-(imidazol-4-yl)-2-oxopropyl phosphate + L-glutamate. The protein operates within amino-acid biosynthesis; L-histidine biosynthesis; L-histidine from 5-phospho-alpha-D-ribose 1-diphosphate: step 7/9. In Thermoanaerobacter sp. (strain X514), this protein is Histidinol-phosphate aminotransferase.